Here is a 698-residue protein sequence, read N- to C-terminus: Elongation factor G (698 aa).

The tr-type G domain occupies 10 to 285; the sequence is AATRNIGIMA…AVVDFLPSPT (276 aa). Residues 19 to 26, 83 to 87, and 137 to 140 each bind GTP; these read AHIDAGKT, DTPGH, and NKMD.

The protein belongs to the TRAFAC class translation factor GTPase superfamily. Classic translation factor GTPase family. EF-G/EF-2 subfamily.

The protein resides in the cytoplasm. Catalyzes the GTP-dependent ribosomal translocation step during translation elongation. During this step, the ribosome changes from the pre-translocational (PRE) to the post-translocational (POST) state as the newly formed A-site-bound peptidyl-tRNA and P-site-bound deacylated tRNA move to the P and E sites, respectively. Catalyzes the coordinated movement of the two tRNA molecules, the mRNA and conformational changes in the ribosome. This is Elongation factor G from Parafrankia sp. (strain EAN1pec).